A 245-amino-acid polypeptide reads, in one-letter code: Sugar fermentation stimulation protein homolog (245 aa).

It belongs to the SfsA family.

The chain is Sugar fermentation stimulation protein homolog from Yersinia pseudotuberculosis serotype I (strain IP32953).